A 146-amino-acid chain; its full sequence is Large ribosomal subunit protein bL21 (146 aa).

Positions 115–146 (KSISLGKSAPKSSAKKETVKKETKPKSEKSTN) are disordered. A compositionally biased stretch (basic and acidic residues) spans 128 to 146 (AKKETVKKETKPKSEKSTN).

The protein belongs to the bacterial ribosomal protein bL21 family. In terms of assembly, part of the 50S ribosomal subunit. Contacts protein L20.

Its function is as follows. This protein binds to 23S rRNA in the presence of protein L20. This Prochlorococcus marinus (strain MIT 9312) protein is Large ribosomal subunit protein bL21.